The primary structure comprises 438 residues: 26S proteasome regulatory subunit 6A (438 aa).

The interval 1–24 (MSTLEELDALDQSQQGGSSNNEGL) is disordered. A compositionally biased stretch (polar residues) spans 11–22 (DQSQQGGSSNNE). 226 to 233 (GPPGTGKT) is a binding site for ATP.

The protein belongs to the AAA ATPase family.

The protein localises to the cytoplasm. It is found in the nucleus. In terms of biological role, the 26S proteasome is involved in the ATP-dependent degradation of ubiquitinated proteins. The regulatory (or ATPase) complex confers ATP dependency and substrate specificity to the 26S complex. This chain is 26S proteasome regulatory subunit 6A (tbp1), found in Schizosaccharomyces pombe (strain 972 / ATCC 24843) (Fission yeast).